Here is a 557-residue protein sequence, read N- to C-terminus: Formate--tetrahydrofolate ligase 2 (557 aa).

66–73 (TPAGEGKT) contributes to the ATP binding site.

Belongs to the formate--tetrahydrofolate ligase family.

It catalyses the reaction (6S)-5,6,7,8-tetrahydrofolate + formate + ATP = (6R)-10-formyltetrahydrofolate + ADP + phosphate. Its pathway is one-carbon metabolism; tetrahydrofolate interconversion. The polypeptide is Formate--tetrahydrofolate ligase 2 (Streptococcus pyogenes serotype M1).